Consider the following 367-residue polypeptide: 2-aminoethylphosphonate--pyruvate transaminase (367 aa).

K194 carries the N6-(pyridoxal phosphate)lysine modification.

The protein belongs to the class-V pyridoxal-phosphate-dependent aminotransferase family. PhnW subfamily. In terms of assembly, homodimer. Pyridoxal 5'-phosphate serves as cofactor.

The catalysed reaction is (2-aminoethyl)phosphonate + pyruvate = phosphonoacetaldehyde + L-alanine. In terms of biological role, involved in phosphonate degradation. The polypeptide is 2-aminoethylphosphonate--pyruvate transaminase (Salmonella dublin (strain CT_02021853)).